Reading from the N-terminus, the 542-residue chain is CTP synthase (542 aa).

An amidoligase domain region spans residues 1–265 (MARYVFITGG…DDEVLAAFGI (265 aa)). Ser13 provides a ligand contact to CTP. Position 13 (Ser13) interacts with UTP. ATP is bound by residues 14–19 (SLGKGI) and Asp71. Mg(2+)-binding residues include Asp71 and Glu139. Residues 146 to 148 (DIE), 186 to 191 (KTKPTQ), and Lys222 each bind CTP. UTP-binding positions include 186-191 (KTKPTQ) and Lys222. Residues 291–541 (TIAIVGKYTG…IEAATEQSRL (251 aa)) form the Glutamine amidotransferase type-1 domain. An L-glutamine-binding site is contributed by Gly353. The active-site Nucleophile; for glutamine hydrolysis is the Cys380. L-glutamine is bound by residues 381 to 384 (FGMQ), Glu404, and Arg469. Catalysis depends on residues His514 and Glu516.

Belongs to the CTP synthase family. As to quaternary structure, homotetramer.

It catalyses the reaction UTP + L-glutamine + ATP + H2O = CTP + L-glutamate + ADP + phosphate + 2 H(+). The enzyme catalyses L-glutamine + H2O = L-glutamate + NH4(+). The catalysed reaction is UTP + NH4(+) + ATP = CTP + ADP + phosphate + 2 H(+). Its pathway is pyrimidine metabolism; CTP biosynthesis via de novo pathway; CTP from UDP: step 2/2. With respect to regulation, allosterically activated by GTP, when glutamine is the substrate; GTP has no effect on the reaction when ammonia is the substrate. The allosteric effector GTP functions by stabilizing the protein conformation that binds the tetrahedral intermediate(s) formed during glutamine hydrolysis. Inhibited by the product CTP, via allosteric rather than competitive inhibition. Functionally, catalyzes the ATP-dependent amination of UTP to CTP with either L-glutamine or ammonia as the source of nitrogen. Regulates intracellular CTP levels through interactions with the four ribonucleotide triphosphates. In Rhizobium etli (strain ATCC 51251 / DSM 11541 / JCM 21823 / NBRC 15573 / CFN 42), this protein is CTP synthase.